The following is a 299-amino-acid chain: tRNA-cytidine(32) 2-sulfurtransferase (299 aa).

The short motif at 49–54 (SGGKDS) is the PP-loop motif element. [4Fe-4S] cluster contacts are provided by Cys-124, Cys-127, and Cys-215.

Belongs to the TtcA family. As to quaternary structure, homodimer. The cofactor is Mg(2+). [4Fe-4S] cluster is required as a cofactor.

The protein localises to the cytoplasm. The catalysed reaction is cytidine(32) in tRNA + S-sulfanyl-L-cysteinyl-[cysteine desulfurase] + AH2 + ATP = 2-thiocytidine(32) in tRNA + L-cysteinyl-[cysteine desulfurase] + A + AMP + diphosphate + H(+). The protein operates within tRNA modification. Its function is as follows. Catalyzes the ATP-dependent 2-thiolation of cytidine in position 32 of tRNA, to form 2-thiocytidine (s(2)C32). The sulfur atoms are provided by the cysteine/cysteine desulfurase (IscS) system. In Deinococcus radiodurans (strain ATCC 13939 / DSM 20539 / JCM 16871 / CCUG 27074 / LMG 4051 / NBRC 15346 / NCIMB 9279 / VKM B-1422 / R1), this protein is tRNA-cytidine(32) 2-sulfurtransferase.